The chain runs to 180 residues: Large ribosomal subunit protein uL5 (180 aa).

It belongs to the universal ribosomal protein uL5 family. In terms of assembly, part of the 50S ribosomal subunit; part of the 5S rRNA/L5/L18/L25 subcomplex. Contacts the 5S rRNA and the P site tRNA. Forms a bridge to the 30S subunit in the 70S ribosome.

This is one of the proteins that bind and probably mediate the attachment of the 5S RNA into the large ribosomal subunit, where it forms part of the central protuberance. In the 70S ribosome it contacts protein S13 of the 30S subunit (bridge B1b), connecting the 2 subunits; this bridge is implicated in subunit movement. Contacts the P site tRNA; the 5S rRNA and some of its associated proteins might help stabilize positioning of ribosome-bound tRNAs. The protein is Large ribosomal subunit protein uL5 of Spiroplasma kunkelii.